The primary structure comprises 223 residues: Adenylate kinase (223 aa).

10 to 15 is an ATP binding site; sequence GAGKGT. The interval 30 to 59 is NMP; sequence STGDILRQAVKEGTEVGKIAGELMKAGKLI. Residues Thr31, Arg36, 57 to 59, 85 to 88, and Gln92 each bind AMP; these read KLI and GFPR. An LID region spans residues 126 to 163; sequence GRYVCAQCGAGYHDEFKRPHKEGVCDICGSTEFKRRPD. Arg127 provides a ligand contact to ATP. Positions 130, 133, 150, and 153 each coordinate Zn(2+). AMP is bound by residues Arg160 and Arg172. Position 200 (Leu200) interacts with ATP.

This sequence belongs to the adenylate kinase family. As to quaternary structure, monomer.

Its subcellular location is the cytoplasm. It catalyses the reaction AMP + ATP = 2 ADP. It participates in purine metabolism; AMP biosynthesis via salvage pathway; AMP from ADP: step 1/1. Catalyzes the reversible transfer of the terminal phosphate group between ATP and AMP. Plays an important role in cellular energy homeostasis and in adenine nucleotide metabolism. The polypeptide is Adenylate kinase (Zymomonas mobilis subsp. mobilis (strain ATCC 31821 / ZM4 / CP4)).